The chain runs to 117 residues: UPF0125 protein VV0820 (117 aa).

The disordered stretch occupies residues 90 to 117 (RKRAEQAKESGAADPVTGGKPSPLRKAD).

The protein belongs to the UPF0125 (RnfH) family.

In Vibrio vulnificus (strain YJ016), this protein is UPF0125 protein VV0820.